A 558-amino-acid chain; its full sequence is PE cleavage protein A (558 aa).

In terms of domain architecture, PE spans 1–93; sequence MSFLVVVPEF…SGSYAAAEAT (93 aa). Residue aspartate 297 is part of the active site.

Belongs to the mycobacterial PE family. PGRS subfamily. Undergoes auto-proteolytic processing.

It is found in the secreted. It localises to the cell surface. Aspartic protease that processes the lipase LipY and other PE_PGRS proteins. Can also cleave itself. In Mycobacterium tuberculosis (strain CDC 1551 / Oshkosh), this protein is PE cleavage protein A.